A 138-amino-acid chain; its full sequence is Large ribosomal subunit protein uL16 (138 aa).

The span at 1–13 shows a compositional bias: basic residues; it reads MLQPARRKFRKEQ. The interval 1–22 is disordered; that stretch reads MLQPARRKFRKEQKGRNTGLAT.

This sequence belongs to the universal ribosomal protein uL16 family. Part of the 50S ribosomal subunit.

Binds 23S rRNA and is also seen to make contacts with the A and possibly P site tRNAs. The sequence is that of Large ribosomal subunit protein uL16 from Thiobacillus denitrificans (strain ATCC 25259 / T1).